Here is a 107-residue protein sequence, read N- to C-terminus: UPF0473 protein llmg_0152 (107 aa).

It belongs to the UPF0473 family.

The sequence is that of UPF0473 protein llmg_0152 from Lactococcus lactis subsp. cremoris (strain MG1363).